The sequence spans 427 residues: Glutamyl-tRNA(Gln) amidotransferase subunit D (427 aa).

Residues 1–18 (MTADPGDRVRVTHGDASH) are compositionally biased toward basic and acidic residues. Residues 1–20 (MTADPGDRVRVTHGDASHEG) are disordered. Residues 80–413 (PTIALISTGG…DDPEAAMQES (334 aa)) form the Asparaginase/glutaminase domain. Active-site residues include Thr-90, Thr-166, Asp-167, and Lys-243.

The protein belongs to the asparaginase 1 family. GatD subfamily. Heterodimer of GatD and GatE.

The enzyme catalyses L-glutamyl-tRNA(Gln) + L-glutamine + ATP + H2O = L-glutaminyl-tRNA(Gln) + L-glutamate + ADP + phosphate + H(+). In terms of biological role, allows the formation of correctly charged Gln-tRNA(Gln) through the transamidation of misacylated Glu-tRNA(Gln) in organisms which lack glutaminyl-tRNA synthetase. The reaction takes place in the presence of glutamine and ATP through an activated gamma-phospho-Glu-tRNA(Gln). The GatDE system is specific for glutamate and does not act on aspartate. The sequence is that of Glutamyl-tRNA(Gln) amidotransferase subunit D from Halobacterium salinarum (strain ATCC 29341 / DSM 671 / R1).